Here is a 446-residue protein sequence, read N- to C-terminus: Chromosomal replication initiator protein DnaA (446 aa).

The domain I, interacts with DnaA modulators stretch occupies residues 1–81; that stretch reads MENISDLWNS…AKLAIRFIIP (81 aa). The segment at 81–109 is domain II; sequence PQSQAEEDIDLPSVKQKHAHDESNHLPQS. Positions 110–326 are domain III, AAA+ region; that stretch reads MLNPKYTFDT…GALIRVVAYS (217 aa). ATP-binding residues include glycine 154, glycine 156, lysine 157, and threonine 158. The segment at 327–446 is domain IV, binds dsDNA; it reads SLINKDMNAD…HVEEVKDILK (120 aa).

It belongs to the DnaA family. As to quaternary structure, oligomerizes as a right-handed, spiral filament on DNA at oriC.

It localises to the cytoplasm. Its function is as follows. Plays an essential role in the initiation and regulation of chromosomal replication. ATP-DnaA binds to the origin of replication (oriC) to initiate formation of the DNA replication initiation complex once per cell cycle. Binds the DnaA box (a 9 base pair repeat at the origin) and separates the double-stranded (ds)DNA. Forms a right-handed helical filament on oriC DNA; dsDNA binds to the exterior of the filament while single-stranded (ss)DNA is stabiized in the filament's interior. The ATP-DnaA-oriC complex binds and stabilizes one strand of the AT-rich DNA unwinding element (DUE), permitting loading of DNA polymerase. After initiation quickly degrades to an ADP-DnaA complex that is not apt for DNA replication. Binds acidic phospholipids. The chain is Chromosomal replication initiator protein DnaA from Bacillus mycoides (strain KBAB4) (Bacillus weihenstephanensis).